A 329-amino-acid polypeptide reads, in one-letter code: DNA-directed RNA polymerase subunit alpha (329 aa).

Positions 1-235 are alpha N-terminal domain (alpha-NTD); the sequence is MLGSVTDFLK…EQLDAFVDLR (235 aa). Residues 249 to 329 are alpha C-terminal domain (alpha-CTD); the sequence is FDPILLRPVD…NWPPASLADN (81 aa).

It belongs to the RNA polymerase alpha chain family. As to quaternary structure, homodimer. The RNAP catalytic core consists of 2 alpha, 1 beta, 1 beta' and 1 omega subunit. When a sigma factor is associated with the core the holoenzyme is formed, which can initiate transcription.

It catalyses the reaction RNA(n) + a ribonucleoside 5'-triphosphate = RNA(n+1) + diphosphate. In terms of biological role, DNA-dependent RNA polymerase catalyzes the transcription of DNA into RNA using the four ribonucleoside triphosphates as substrates. This is DNA-directed RNA polymerase subunit alpha from Tolumonas auensis (strain DSM 9187 / NBRC 110442 / TA 4).